Here is a 57-residue protein sequence, read N- to C-terminus: Small ribosomal subunit protein bS21 (57 aa).

It belongs to the bacterial ribosomal protein bS21 family.

This chain is Small ribosomal subunit protein bS21, found in Bacillus cytotoxicus (strain DSM 22905 / CIP 110041 / 391-98 / NVH 391-98).